A 309-amino-acid chain; its full sequence is 4-diphosphocytidyl-2-C-methyl-D-erythritol kinase (309 aa).

K11 is an active-site residue. Residue 94 to 104 (PVAAGLAGGSA) coordinates ATP. Residue D136 is part of the active site.

The protein belongs to the GHMP kinase family. IspE subfamily.

It carries out the reaction 4-CDP-2-C-methyl-D-erythritol + ATP = 4-CDP-2-C-methyl-D-erythritol 2-phosphate + ADP + H(+). Its pathway is isoprenoid biosynthesis; isopentenyl diphosphate biosynthesis via DXP pathway; isopentenyl diphosphate from 1-deoxy-D-xylulose 5-phosphate: step 3/6. Functionally, catalyzes the phosphorylation of the position 2 hydroxy group of 4-diphosphocytidyl-2C-methyl-D-erythritol. The chain is 4-diphosphocytidyl-2-C-methyl-D-erythritol kinase from Synechococcus sp. (strain JA-3-3Ab) (Cyanobacteria bacterium Yellowstone A-Prime).